The following is a 1196-amino-acid chain: Major DNA-binding protein (1196 aa).

A zinc finger lies at 499-512 (CNLCTFDTRHACVH). Short sequence motifs (required for filament formation) lie at residues 843–844 (FW) and 1142–1144 (FNF). The disordered stretch occupies residues 1158–1196 (GGPGAPGPAFAGRKRAFHGDDPFGEGPPDKKGDLTLDML). The tract at residues 1170–1196 (RKRAFHGDDPFGEGPPDKKGDLTLDML) is required for nuclear localization. Residues 1174-1196 (FHGDDPFGEGPPDKKGDLTLDML) are compositionally biased toward basic and acidic residues.

It belongs to the herpesviridae major DNA-binding protein family. Homooligomers. Forms double-helical filaments necessary for the formation of replication compartments within the host nucleus. Interacts with the origin-binding protein. Interacts with the helicase primase complex; this interaction stimulates primer synthesis activity of the helicase-primase complex. Interacts with the DNA polymerase. Interacts with the alkaline exonuclease; this interaction increases its nuclease processivity. Interacts with ICP27; this interaction plays a role in the stimulation of late gene transcription.

The protein resides in the host nucleus. Plays several crucial roles in viral infection. Participates in the opening of the viral DNA origin to initiate replication by interacting with the origin-binding protein. May disrupt loops, hairpins and other secondary structures present on ssDNA to reduce and eliminate pausing of viral DNA polymerase at specific sites during elongation. Promotes viral DNA recombination by performing strand-transfer, characterized by the ability to transfer a DNA strand from a linear duplex to a complementary single-stranded DNA circle. Can also catalyze the renaturation of complementary single strands. Additionally, reorganizes the host cell nucleus, leading to the formation of prereplicative sites and replication compartments. This process is driven by the protein which can form double-helical filaments in the absence of DNA. This is Major DNA-binding protein from Homo sapiens (Human).